The sequence spans 452 residues: Pre-mRNA-splicing factor prp46 (452 aa).

The span at 61–70 (AAKQAQAAAA) shows a compositional bias: low complexity. The tract at residues 61 to 129 (AAKQAQAAAA…SATRQQPPEW (69 aa)) is disordered. The span at 114–125 (SLIQRPSATRQQ) shows a compositional bias: polar residues. WD repeat units follow at residues 141–180 (GHLG…LRLT), 183–222 (GHIS…VIRH), 225–264 (GHLS…NIHV), 267–308 (GHTG…GVLT), 310–349 (HKKG…QNFE), 350–388 (GHNA…RYQT), and 399–438 (EAEA…TPET). A disordered region spans residues 432-452 (DQATPETHPVTWAPTLGRQRY).

This sequence belongs to the WD repeat PRL1/PRL2 family. As to quaternary structure, associated with the spliceosome.

The protein resides in the cytoplasm. Its subcellular location is the nucleus. In terms of biological role, involved in pre-mRNA splicing and required for cell cycle progression at G2/M. In Emericella nidulans (strain FGSC A4 / ATCC 38163 / CBS 112.46 / NRRL 194 / M139) (Aspergillus nidulans), this protein is Pre-mRNA-splicing factor prp46 (prp46).